The primary structure comprises 483 residues: Cobyric acid synthase (483 aa).

The 188-residue stretch at 252-439 (KLNVVVPVLT…LHGFFDEAEA (188 aa)) folds into the GATase cobBQ-type domain. Cys-333 acts as the Nucleophile in catalysis. The active site involves His-431.

The protein belongs to the CobB/CobQ family. CobQ subfamily.

It functions in the pathway cofactor biosynthesis; adenosylcobalamin biosynthesis. In terms of biological role, catalyzes amidations at positions B, D, E, and G on adenosylcobyrinic A,C-diamide. NH(2) groups are provided by glutamine, and one molecule of ATP is hydrogenolyzed for each amidation. The chain is Cobyric acid synthase from Vibrio parahaemolyticus serotype O3:K6 (strain RIMD 2210633).